Consider the following 353-residue polypeptide: Quinolinate synthase (353 aa).

Residues histidine 47 and serine 68 each coordinate iminosuccinate. Cysteine 113 lines the [4Fe-4S] cluster pocket. Residues 139-141 (YAN) and serine 156 each bind iminosuccinate. Cysteine 200 lines the [4Fe-4S] cluster pocket. Iminosuccinate is bound by residues 226-228 (HPE) and threonine 243. Cysteine 297 contacts [4Fe-4S] cluster.

The protein belongs to the quinolinate synthase family. Type 1 subfamily. [4Fe-4S] cluster serves as cofactor.

It is found in the cytoplasm. It catalyses the reaction iminosuccinate + dihydroxyacetone phosphate = quinolinate + phosphate + 2 H2O + H(+). Its pathway is cofactor biosynthesis; NAD(+) biosynthesis; quinolinate from iminoaspartate: step 1/1. Its function is as follows. Catalyzes the condensation of iminoaspartate with dihydroxyacetone phosphate to form quinolinate. The chain is Quinolinate synthase from Vibrio cholerae serotype O1 (strain ATCC 39541 / Classical Ogawa 395 / O395).